The primary structure comprises 285 residues: CCR4-NOT transcription complex subunit 7 (285 aa).

A divalent metal cation is bound by residues aspartate 40, glutamate 42, aspartate 161, aspartate 230, and glutamate 278.

It belongs to the CAF1 family. Component of the CCR4-NOT complex; distinct complexes seem to exist that differ in the participation of probably mutually exclusive catalytic subunits; the complex contains two deadenylase subunits, CNOT6 or CNOT6L, and CNOT7 or CNOT8. In the complex, interacts directly with CNOT1. Interacts with AGO2. Interacts with TOB1; recruited by TOB1 to a ternary complex with CPEB3 which is required for mRNA deadenylation and decay. Interacts with BTG1. Interacts with BTG2. Interacts with NANOS2. Interacts with ZFP36, ZFP36L1 and ZFP36L2; these interactions are inhibited in response to phorbol 12-myristate 13-acetate (PMA) treatment in a p38 MAPK-dependent manner. Interacts with BTG4. Interacts with EIF4E; this interaction is increased by CNOT7 interaction with BTG4. Mn(2+) is required as a cofactor. Mg(2+) serves as cofactor. It depends on Co(2+) as a cofactor.

It localises to the nucleus. The protein resides in the cytoplasm. It is found in the P-body. The protein localises to the cytoplasmic ribonucleoprotein granule. The catalysed reaction is Exonucleolytic cleavage of poly(A) to 5'-AMP.. Has 3'-5' poly(A) exoribonuclease activity for synthetic poly(A) RNA substrate. Its function seems to be partially redundant with that of CNOT8. Catalytic component of the CCR4-NOT complex which is one of the major cellular mRNA deadenylases and is linked to various cellular processes including bulk mRNA degradation, miRNA-mediated repression, translational repression during translational initiation and general transcription regulation. During miRNA-mediated repression the complex also seems to act as translational repressor during translational initiation. Additional complex functions may be a consequence of its influence on mRNA expression. Required for miRNA-mediated mRNA deadenylation. Associates with members of the BTG family such as TOB1 and BTG2 and is required for their anti-proliferative activity. The polypeptide is CCR4-NOT transcription complex subunit 7 (CNOT7) (Bos taurus (Bovine)).